Reading from the N-terminus, the 88-residue chain is Protein ORGAN SIZE RELATED 1 (88 aa).

The organ Size Related (OSR) domain stretch occupies residues 25–76; the sequence is ITARSVALLLFLSLLLLILPPFLPPLPPPPATLLLLPLLLMILLIFLAFSPS. 2 helical membrane passes run 30 to 50 and 53 to 73; these read VALL…LPPL and PPAT…FLAF.

Belongs to the plant organ size related (OSR) protein family. Mostly expressed in flowers, and, to a lower extent, in leaves and cotyledons.

Its subcellular location is the membrane. It is found in the endoplasmic reticulum. It localises to the nucleus. The protein localises to the cytoplasm. Its function is as follows. Together with ARGOS and ARL, regulates organ growth and final organ size. Promotes both cell expansion and proliferation-dependent organ growth, in an ANT-dependent manner. The chain is Protein ORGAN SIZE RELATED 1 from Arabidopsis thaliana (Mouse-ear cress).